Reading from the N-terminus, the 286-residue chain is Pyridoxal kinase PdxY (286 aa).

Residues Ser9 and 44-45 (TQ) each bind substrate. ATP contacts are provided by Asp111, Glu148, and Lys181. Residue Asp222 coordinates substrate.

Belongs to the pyridoxine kinase family. PdxY subfamily. In terms of assembly, homodimer. The cofactor is Mg(2+).

The catalysed reaction is pyridoxal + ATP = pyridoxal 5'-phosphate + ADP + H(+). It participates in cofactor metabolism; pyridoxal 5'-phosphate salvage; pyridoxal 5'-phosphate from pyridoxal: step 1/1. In terms of biological role, pyridoxal kinase involved in the salvage pathway of pyridoxal 5'-phosphate (PLP). Catalyzes the phosphorylation of pyridoxal to PLP. This Histophilus somni (strain 129Pt) (Haemophilus somnus) protein is Pyridoxal kinase PdxY.